The sequence spans 1178 residues: MSTIEFETIGSRLQSLEAKLQAQNESHDQIVLSGARGPVVSGSVPSARVPPLATSASAATSATHAPSLGAGSVSGSGISIAQRPAPPVPHATPFGSASASSSSSSASAFASAAPATGTFGGTYTPPTTRVSRATPTLPMLSSGPGGGLNRTRPVILPLPTPPHPPVSETDMKLKIIMEQTGKLNINGRQYPTDINDLKHLGDLGNGTSGNVVKMMHLSSNTIIAVKQMRRTGNAEENKRILMDLDVVLKSHDCKYIVKCLGCFVRDPDVWICMELMSMCFDKLLKLSKKPVPEQILGKVTVATVNALSYLKDKHGVIHRDVKPSNILIDERGNIKLCDFGISGRLVDSKANTRSAGCAAYMAPERIDPKKPKYDIRADVWSLGITLVELATARSPYEGCNTDFEVLTKVLDSEPPCLPYGEGYNFSQQFRDFVIKCLTKNHQDRPKYPELLAQPFIRIYESAKVDVPNWFQSIKDNRLRANGDPTLQRATATGSAIGSGAGSLAGSGSGSAGGAVKYGRATTYAGQSPTNPQKTIKPTQIPSYQQQQSQFFMQSATQLPQTTTTTPTATTNCFGGSGNGNGRGNGSGGSGNGSGSSSSASPLSPPSAGIGDLNRLYRKSPFMQRKLSNGSHHPHYKYNDESPKKESMFSSIGQSILRNLTTSPFSQKKHNSTATTIPLPHNNQTLITDAATAAAAAATATTPPNIAATVLTTTPTTTPTWRLPTENSQAYDSCDSSSNATTTTLNLGLSSPSPSLPRKQFPTESPTLQLTSQQQQQPQRLQPGNQSPIVLQRFYHQQNQLREKEAAERYQQQRQQPPVGVTSTNPFHSNYVPPPPSTHSTSSQSSTQSTCSQIAINPASISPSSGSGTGNMAGLGIGSAPASGLGAAGHFGAGGTGEQLQYQPLPIAAEATGTSPTLQSRSPEQQSDYGGNGNMVASKLSKLYARRQLLGQSSSSGASNSSLDGCSREQHDAGWFNTLAGAMKRQFATYVKTQLNSTATSPVASSMDRDQEPVHPQPPAYRSVVNNGSGGKSYYYRTLSAASSSSNTSQSTSPTTEPLPGGGTSSFLRRYASSGPGGSISTPPSPHILAGLDRRHRSPDPPPRYNRGQSPLLLRKNLLELSGQPPGSPLLHRRYVSASPPLPPPRRGSESVPGSPQHFRTRIHYTPEPQRRIYRTIDQ.

2 disordered regions span residues 74–103 (SGSGISIAQRPAPPVPHATPFGSASASSSS) and 115–148 (ATGTFGGTYTPPTTRVSRATPTLPMLSSGPGGGL). Composition is skewed to low complexity over residues 91–103 (ATPFGSASASSSS) and 115–128 (ATGTFGGTYTPPTT). A Protein kinase domain is found at 197-456 (LKHLGDLGNG…YPELLAQPFI (260 aa)). ATP contacts are provided by residues 203–211 (LGNGTSGNV) and lysine 226. Catalysis depends on aspartate 320, which acts as the Proton acceptor. The residue at position 348 (serine 348) is a Phosphoserine. The residue at position 352 (threonine 352) is a Phosphothreonine. Positions 522-648 (TYAGQSPTNP…DESPKKESMF (127 aa)) are disordered. The segment covering 523–543 (YAGQSPTNPQKTIKPTQIPSY) has biased composition (polar residues). A compositionally biased stretch (low complexity) spans 544–570 (QQQQSQFFMQSATQLPQTTTTTPTATT). A compositionally biased stretch (gly residues) spans 574-593 (GGSGNGNGRGNGSGGSGNGS). Low complexity predominate over residues 594–608 (GSSSSASPLSPPSAG). Residues 636–646 (KYNDESPKKES) show a composition bias toward basic and acidic residues. Serine 646 and serine 662 each carry phosphoserine. Disordered stretches follow at residues 715–783 (TTTP…LQPG), 797–851 (QNQL…STCS), 912–933 (GTSPTLQSRSPEQQSDYGGNGN), 999–1026 (TSPVASSMDRDQEPVHPQPPAYRSVVNN), 1042–1108 (SSSS…NRGQ), and 1122–1178 (GQPP…TIDQ). Residues 724-734 (TENSQAYDSCD) are compositionally biased toward polar residues. 3 stretches are compositionally biased toward low complexity: residues 735 to 783 (SSSN…LQPG), 808 to 817 (RYQQQRQQPP), and 837 to 851 (THSTSSQSSTQSTCS). Polar residues predominate over residues 912–928 (GTSPTLQSRSPEQQSDY). Residues 1042–1055 (SSSSNTSQSTSPTT) are compositionally biased toward low complexity. Phosphoserine occurs at positions 1150 and 1154. Basic and acidic residues predominate over residues 1168–1178 (PQRRIYRTIDQ).

This sequence belongs to the protein kinase superfamily. STE Ser/Thr protein kinase family. MAP kinase kinase subfamily. Post-translationally, MAPKK is itself dependent on Ser/Thr phosphorylation for activity catalyzed by MAP kinase kinase kinases. Weakly autophosphorylated.

It catalyses the reaction L-seryl-[protein] + ATP = O-phospho-L-seryl-[protein] + ADP + H(+). The enzyme catalyses L-threonyl-[protein] + ATP = O-phospho-L-threonyl-[protein] + ADP + H(+). It carries out the reaction L-tyrosyl-[protein] + ATP = O-phospho-L-tyrosyl-[protein] + ADP + H(+). Required for the epithelial cell sheet movement called dorsal closure (DC), which allows establishment of the dorsal epidermis. Controls the expression in the dorsal epithelium edges of another dorsal closure gene, puckered (puc). Phosphorylates and activates the MAP kinase bsk; bsk signal transduction pathway mediates an immune response and morphogenesis. This is Dual specificity mitogen-activated protein kinase kinase hemipterous (hep) from Drosophila melanogaster (Fruit fly).